The sequence spans 568 residues: Oxygen-dependent choline dehydrogenase (568 aa).

Residue 8–37 (DYIIIGAGSAGNTLAARLTEDAGVTVLLLE) coordinates FAD. Catalysis depends on His-477, which acts as the Proton acceptor.

This sequence belongs to the GMC oxidoreductase family. FAD is required as a cofactor.

It carries out the reaction choline + A = betaine aldehyde + AH2. The catalysed reaction is betaine aldehyde + NAD(+) + H2O = glycine betaine + NADH + 2 H(+). It functions in the pathway amine and polyamine biosynthesis; betaine biosynthesis via choline pathway; betaine aldehyde from choline (cytochrome c reductase route): step 1/1. Functionally, involved in the biosynthesis of the osmoprotectant glycine betaine. Catalyzes the oxidation of choline to betaine aldehyde and betaine aldehyde to glycine betaine at the same rate. This is Oxygen-dependent choline dehydrogenase from Pseudomonas syringae pv. syringae (strain B728a).